Here is a 385-residue protein sequence, read N- to C-terminus: Linearmycin resistance permease protein LnrN (385 aa).

The next 6 helical transmembrane spans lie at Tyr-22–Gly-42, Ala-198–Leu-218, Ile-239–Leu-259, Ala-274–Ile-294, Leu-305–Ile-325, and Asp-360–Leu-380. In terms of domain architecture, ABC transmembrane type-2 spans Lys-163–Ala-382.

Belongs to the ABC-2 integral membrane protein family. The complex is composed of two ATP-binding proteins (LnrL) and two transmembrane proteins (LnrM and LnrN).

It localises to the cell membrane. Required for resistance to linearmycins, a family of antibiotic-specialized metabolites produced by some streptomycetes. Part of the ABC transporter complex LnrLMN that probably facilitates linearmycin removal from the membrane. Responsible for the translocation of the substrate across the membrane. Also mediates KinC-dependent biofilm morphology. The polypeptide is Linearmycin resistance permease protein LnrN (Bacillus subtilis (strain 168)).